A 255-amino-acid chain; its full sequence is tRNA pseudouridine synthase B (255 aa).

Asp-52 functions as the Nucleophile in the catalytic mechanism. Substrate-binding residues include Tyr-80, Tyr-183, and Leu-204.

It belongs to the pseudouridine synthase TruB family. Type 1 subfamily.

It carries out the reaction uridine(55) in tRNA = pseudouridine(55) in tRNA. In terms of biological role, responsible for synthesis of pseudouridine from uracil-55 in the psi GC loop of transfer RNAs. In Blochmanniella floridana, this protein is tRNA pseudouridine synthase B.